The following is a 320-amino-acid chain: Cytosolic Fe-S cluster assembly factor NUBP1 (320 aa).

Position 1 is an N-acetylmethionine (methionine 1). Positions 8, 22, 25, and 31 each coordinate [4Fe-4S] cluster. 62–69 (GKGGVGKS) is a binding site for ATP. Positions 235 and 238 each coordinate [4Fe-4S] cluster.

The protein belongs to the Mrp/NBP35 ATP-binding proteins family. NUBP1/NBP35 subfamily. Heterotetramer of 2 NUBP1 and 2 NUBP2 chains. Interacts with KIFC1. Interacts with the BBS/CCT complex subunit CCT1. It depends on [4Fe-4S] cluster as a cofactor.

It is found in the cytoplasm. The protein resides in the nucleus. The protein localises to the cell projection. Its subcellular location is the cytoskeleton. It localises to the cilium axoneme. It is found in the cilium basal body. The protein resides in the microtubule organizing center. The protein localises to the centrosome. Its subcellular location is the centriole. Its function is as follows. Component of the cytosolic iron-sulfur (Fe/S) protein assembly (CIA) machinery. Required for maturation of extramitochondrial Fe-S proteins. The NUBP1-NUBP2 heterotetramer forms a Fe-S scaffold complex, mediating the de novo assembly of an Fe-S cluster and its transfer to target apoproteins. Implicated in the regulation of centrosome duplication. Negatively regulates cilium formation and structure. This Bos taurus (Bovine) protein is Cytosolic Fe-S cluster assembly factor NUBP1.